A 216-amino-acid polypeptide reads, in one-letter code: Ribosomal RNA large subunit methyltransferase E (216 aa).

The S-adenosyl-L-methionine site is built by G71, W73, D88, D104, and D126. K166 acts as the Proton acceptor in catalysis.

It belongs to the class I-like SAM-binding methyltransferase superfamily. RNA methyltransferase RlmE family.

Its subcellular location is the cytoplasm. It carries out the reaction uridine(2552) in 23S rRNA + S-adenosyl-L-methionine = 2'-O-methyluridine(2552) in 23S rRNA + S-adenosyl-L-homocysteine + H(+). Its function is as follows. Specifically methylates the uridine in position 2552 of 23S rRNA at the 2'-O position of the ribose in the fully assembled 50S ribosomal subunit. In Wolbachia sp. subsp. Brugia malayi (strain TRS), this protein is Ribosomal RNA large subunit methyltransferase E.